The primary structure comprises 284 residues: Distal membrane arm assembly component 2 (284 aa).

The protein belongs to the ATP synthase subunit s family. As to quaternary structure, associates with mitochondrial complex I assembly intermediates during its biogenesis.

In terms of biological role, involved in the assembly of the mitochondrial membrane respiratory chain NADH dehydrogenase (Complex I). The chain is Distal membrane arm assembly component 2 from Drosophila melanogaster (Fruit fly).